The chain runs to 229 residues: GTP cyclohydrolase 1 (229 aa).

The segment at 1–26 (MDAKIKPLRGGKPADARPEFQPAELD) is disordered. Cys118, His121, and Cys189 together coordinate Zn(2+).

The protein belongs to the GTP cyclohydrolase I family. As to quaternary structure, toroid-shaped homodecamer, composed of two pentamers of five dimers.

The enzyme catalyses GTP + H2O = 7,8-dihydroneopterin 3'-triphosphate + formate + H(+). It participates in cofactor biosynthesis; 7,8-dihydroneopterin triphosphate biosynthesis; 7,8-dihydroneopterin triphosphate from GTP: step 1/1. The sequence is that of GTP cyclohydrolase 1 from Rhodopseudomonas palustris (strain BisB5).